The following is a 1170-amino-acid chain: Integrin alpha-2 (1170 aa).

Residues 1–18 (PLQLVLVFSQGILNCCVA) form the signal peptide. Topologically, residues 19–1121 (YNVGLPKAKI…KPHEKVEVPT (1103 aa)) are extracellular. FG-GAP repeat units lie at residues 23-81 (LPKA…TTTC) and 90-150 (TSMS…LRTS). An intrachain disulfide couples C72 to C81. N-linked (GlcNAc...) asparagine glycosylation is found at N94, N101, and N332. Residues 177–354 (WDAVKNFLEK…TIGEQIFSIE (178 aa)) form the VWFA domain. FG-GAP repeat units lie at residues 355–409 (GTVQ…LIFS), 412–464 (AFEQ…ENGN), 466–528 (TVIQ…ILNW), 529–587 (HQFL…MIRL), and 591–653 (QKIL…FTPK). 3 N-linked (GlcNAc...) asparagine glycosylation sites follow: N421, N449, and N464. A Cell attachment site motif is present at residues 472 to 474 (RGD). Ca(2+) contacts are provided by D488, N490, D492, D496, D552, N554, D556, D560, D616, N618, D620, and D624. C669 and C726 are oxidised to a cystine. N-linked (GlcNAc...) asparagine glycosylation is found at N688 and N748. 2 cysteine pairs are disulfide-bonded: C778–C784 and C854–C865. N-linked (GlcNAc...) asparagine glycosylation is present at N945. 2 disulfides stabilise this stretch: C1008-C1039 and C1044-C1049. N-linked (GlcNAc...) asparagine glycosylation is found at N1063 and N1070. The helical transmembrane segment at 1122–1143 (GVIVGSVIAGILLLLALVAILW) threads the bilayer. Residues 1144-1170 (KLGFFKRKYEKMAKNPDETDETTELNS) lie on the Cytoplasmic side of the membrane. The short motif at 1146 to 1150 (GFFKR) is the GFFKR motif element.

Belongs to the integrin alpha chain family. As to quaternary structure, heterodimer of an alpha and a beta subunit. Alpha-2 associates with beta-1. Interacts with HPS5 and RAB21.

The protein resides in the membrane. In terms of biological role, integrin alpha-2/beta-1 is a receptor for laminin, collagen, collagen C-propeptides, fibronectin and E-cadherin. It recognizes the proline-hydroxylated sequence G-F-P-G-E-R in collagen. It is responsible for adhesion of platelets and other cells to collagens, modulation of collagen and collagenase gene expression, force generation and organization of newly synthesized extracellular matrix. The sequence is that of Integrin alpha-2 (ITGA2) from Bos taurus (Bovine).